The following is an 814-amino-acid chain: Transcription activator of gluconeogenesis PADG_03802 (814 aa).

The segment at 1–90 (MTSSARNGSP…SAKDPLRPRR (90 aa)) is disordered. Low complexity predominate over residues 69–83 (STSSTAASANNASAK). The zn(2)-C6 fungal-type DNA-binding region spans 97-125 (CFACQRAHLTCGDERPCQRCIKRGLQDTC). Disordered stretches follow at residues 164 to 208 (NTNS…TNNY), 236 to 287 (SAFQ…PTFF), 323 to 384 (AGDT…SRNI), 442 to 461 (PPTN…STPS), 598 to 617 (TGGS…YNSR), and 695 to 739 (SAAG…ATNV). A compositionally biased stretch (low complexity) spans 171–188 (NGTNSNSDNNSTNTNSNN). 4 stretches are compositionally biased toward polar residues: residues 189 to 208 (KPSH…TNNY), 248 to 279 (FDLS…SQNP), 339 to 359 (GRSS…NQSP), and 375 to 384 (GQGQTNSRNI). The segment covering 442–451 (PPTNTQHQQQ) has biased composition (low complexity). The span at 720-739 (GTTSAVNGVSNGSGNNATNV) shows a compositional bias: low complexity.

It belongs to the ERT1/acuK family.

It is found in the nucleus. Its function is as follows. Transcription factor which regulates nonfermentable carbon utilization. Activator of gluconeogenetic genes. The protein is Transcription activator of gluconeogenesis PADG_03802 of Paracoccidioides brasiliensis (strain Pb18).